A 221-amino-acid chain; its full sequence is Translation initiation factor 6 (221 aa).

It belongs to the eIF-6 family.

Functionally, binds to the 50S ribosomal subunit and prevents its association with the 30S ribosomal subunit to form the 70S initiation complex. The protein is Translation initiation factor 6 of Methanopyrus kandleri (strain AV19 / DSM 6324 / JCM 9639 / NBRC 100938).